A 539-amino-acid polypeptide reads, in one-letter code: MAKLIAFNQEAREGILKGVDALANAVKVTLGPRGRNVVLQKAFGSPTVTNDGVTIAREIDLSDPFENLGAQLVKSVAVKTNDIAGDGTTTATLLAQAVVTEGLRNVAAGANPIELNRGIAAGSEFVVGKLRERATDVSSAADIANVATVSSRDPEVGDMVAAAMEKVGKDGVVTVEESQSIESYLDVTEGVSFDKGFLSPYFITDTDTQHAVLEQPAILLVRNKISSLPDFLPVLEKALEASKPILIIAEDVEGEPLQTLVVNSIRKTLRAVAVKAPYFGERRKAFMDDLAVVTGATVIDPEVGVNLNEAGAEVFGTARRVTVTKDETIIVDGAGTAEAVENRRAQIRREIENTDSAWDREKAEERLAKLSGGVAVIKVGAATETEVSERKLRVEDAINAARAAAQEGVIAGGGSALVQISKELREFAQEFEGDAKIGVIALANALAKPTYWIADNAGLDGAVVVSKVSELPNGEGFNAATLEYGNLIEQGIIDPVKVTHSAVVNATSVARMVLTTEASVVEKPAAPAPEAGHHHHHHH.

ATP-binding positions include 29–32 (TLGP), 86–90 (DGTTT), Gly-413, 478–480 (NAA), and Asp-494.

Belongs to the chaperonin (HSP60) family. As to quaternary structure, forms a cylinder of 14 subunits composed of two heptameric rings stacked back-to-back. Interacts with the co-chaperonin GroES.

It localises to the cytoplasm. The catalysed reaction is ATP + H2O + a folded polypeptide = ADP + phosphate + an unfolded polypeptide.. In terms of biological role, together with its co-chaperonin GroES, plays an essential role in assisting protein folding. The GroEL-GroES system forms a nano-cage that allows encapsulation of the non-native substrate proteins and provides a physical environment optimized to promote and accelerate protein folding. This chain is Chaperonin GroEL 1, found in Corynebacterium diphtheriae (strain ATCC 700971 / NCTC 13129 / Biotype gravis).